The primary structure comprises 333 residues: Probable tRNA pseudouridine synthase B (333 aa).

Aspartate 71 serves as the catalytic Nucleophile. The 76-residue stretch at 238-313 folds into the PUA domain; the sequence is LPKIWVRDSA…LVARTDRVVM (76 aa).

Belongs to the pseudouridine synthase TruB family. Type 2 subfamily.

It catalyses the reaction uridine(55) in tRNA = pseudouridine(55) in tRNA. In terms of biological role, could be responsible for synthesis of pseudouridine from uracil-55 in the psi GC loop of transfer RNAs. The polypeptide is Probable tRNA pseudouridine synthase B (Pyrobaculum calidifontis (strain DSM 21063 / JCM 11548 / VA1)).